The following is a 291-amino-acid chain: Methionine aminopeptidase (291 aa).

Histidine 118 lines the substrate pocket. A divalent metal cation-binding residues include aspartate 135, aspartate 146, and histidine 209. Residue histidine 216 participates in substrate binding. A divalent metal cation-binding residues include glutamate 241 and glutamate 273.

This sequence belongs to the peptidase M24A family. Methionine aminopeptidase type 1 subfamily. Monomer. Co(2+) is required as a cofactor. The cofactor is Zn(2+). Mn(2+) serves as cofactor. It depends on Fe(2+) as a cofactor.

The enzyme catalyses Release of N-terminal amino acids, preferentially methionine, from peptides and arylamides.. Removes the N-terminal methionine from nascent proteins. The N-terminal methionine is often cleaved when the second residue in the primary sequence is small and uncharged (Met-Ala-, Cys, Gly, Pro, Ser, Thr, or Val). Requires deformylation of the N(alpha)-formylated initiator methionine before it can be hydrolyzed. The chain is Methionine aminopeptidase from Chlamydia trachomatis serovar D (strain ATCC VR-885 / DSM 19411 / UW-3/Cx).